We begin with the raw amino-acid sequence, 299 residues long: Ankyrin repeat domain-containing protein 54 (299 aa).

Residues 1–32 (MAAAAGGADDESRSGRSSSDGECAVAPEPLTG) are disordered. Alanine 2 is subject to N-acetylalanine. A phosphoserine mark is found at serine 57 and serine 62. A Nuclear localization signal (NLS) motif is present at residues 98-116 (RRLGPTGKEVHALKRLRDS). 4 ANK repeats span residues 108–137 (HALK…DPCA), 141–170 (KGRT…DPNQ), 174–203 (LGNT…RVDA), and 207–239 (AGRT…EVKQ). The interval 140–240 (DKGRTALHFA…EAVRLEVKQI (101 aa)) is LYN-binding. A Nuclear export signal (NES) motif is present at residues 282–292 (LLASFTSLSLQ).

As to quaternary structure, interacts (via ankyrin repeat region) with LYN (via SH3-domain) in an activation-independent status of LYN. Forms a multiprotein complex with LYN and HCLS1. Interacts with TSN2, VAV1, DBNL and LASP1.

It is found in the nucleus. The protein localises to the cytoplasm. It localises to the midbody. Its function is as follows. Plays an important role in regulating intracellular signaling events associated with erythroid terminal differentiation. The protein is Ankyrin repeat domain-containing protein 54 (ANKRD54) of Bos taurus (Bovine).